A 134-amino-acid polypeptide reads, in one-letter code: Secretin (134 aa).

A signal peptide spans 1-21 (MATRALLLLLLLPPLLLLAGC). Residues 22–31 (AARPAPPRAP) constitute a propeptide that is removed on maturation. A Valine amide modification is found at Val-59. Ser-63 carries the phosphoserine modification. Residues 63 to 134 (SQQDPENNTA…PAAEGSPMPP (72 aa)) constitute a propeptide that is removed on maturation.

It belongs to the glucagon family.

Its subcellular location is the secreted. Functionally, hormone involved in different processes, such as regulation of the pH of the duodenal content, food intake and water homeostasis. Exerts its biological effects by binding to secretin receptor (SCTR), a G-protein coupled receptor expressed in the basolateral domain of several cells. Acts as a key gastrointestinal hormone by regulating the pH of the duodenal content. Secreted by S cells of the duodenum in the crypts of Lieberkuehn and regulates the pH of the duodenum by (1) inhibiting the secretion of gastric acid from the parietal cells of the stomach and (2) stimulating the production of bicarbonate (NaHCO(3)) from the ductal cells of the pancreas. Production of bicarbonate is essential to neutralize the pH and ensure no damage is done to the small intestine by the gastric acid. In addition to regulating the pH of the duodenal content, plays a central role in diet induced thermogenesis: acts as a non-sympathetic brown fat (BAT) activator mediating prandial thermogenesis, which consequentially induces satiation. Mechanistically, secretin released by the gut after a meal binds to secretin receptor (SCTR) in brown adipocytes, activating brown fat thermogenesis by stimulating lipolysis, which is sensed in the brain and promotes satiation. Also able to stimulate lipolysis in white adipocytes. Also plays an important role in cellular osmoregulation: released into the systemic circulation in response to hyperosmolality and acts at different levels in the hypothalamus, pituitary and kidney to regulate water homeostasis. Also plays a role in the central nervous system, possibly by acting as a neuropeptide hormone: required for hippocampal synaptic function and neural progenitor cells maintenance. The chain is Secretin from Sus scrofa (Pig).